The chain runs to 201 residues: Orotate phosphoribosyltransferase (201 aa).

Residue 113-121 coordinates 5-phospho-alpha-D-ribose 1-diphosphate; that stretch reads EDIITTGKS. Positions 117 and 145 each coordinate orotate.

The protein belongs to the purine/pyrimidine phosphoribosyltransferase family. PyrE subfamily. As to quaternary structure, homodimer. Mg(2+) serves as cofactor.

It carries out the reaction orotidine 5'-phosphate + diphosphate = orotate + 5-phospho-alpha-D-ribose 1-diphosphate. It participates in pyrimidine metabolism; UMP biosynthesis via de novo pathway; UMP from orotate: step 1/2. Functionally, catalyzes the transfer of a ribosyl phosphate group from 5-phosphoribose 1-diphosphate to orotate, leading to the formation of orotidine monophosphate (OMP). This chain is Orotate phosphoribosyltransferase, found in Helicobacter acinonychis (strain Sheeba).